Reading from the N-terminus, the 408-residue chain is tRNA-specific 2-thiouridylase MnmA (408 aa).

Residues 20-27 and leucine 46 contribute to the ATP site; that span reads AMSGGVDS. Cysteine 114 acts as the Nucleophile in catalysis. Cysteine 114 and cysteine 210 are disulfide-bonded. Glycine 138 contributes to the ATP binding site. Positions 160 to 162 are interaction with tRNA; the sequence is RDQ. The Cysteine persulfide intermediate role is filled by cysteine 210.

Belongs to the MnmA/TRMU family.

The protein resides in the cytoplasm. The enzyme catalyses S-sulfanyl-L-cysteinyl-[protein] + uridine(34) in tRNA + AH2 + ATP = 2-thiouridine(34) in tRNA + L-cysteinyl-[protein] + A + AMP + diphosphate + H(+). Catalyzes the 2-thiolation of uridine at the wobble position (U34) of tRNA, leading to the formation of s(2)U34. In Bartonella quintana (strain Toulouse) (Rochalimaea quintana), this protein is tRNA-specific 2-thiouridylase MnmA.